Consider the following 202-residue polypeptide: Small ribosomal subunit protein uS4c (202 aa).

Positions 90 to 158 (MRLDNIIFRL…MKRSRDSYEK (69 aa)) constitute an S4 RNA-binding domain.

It belongs to the universal ribosomal protein uS4 family. In terms of assembly, part of the 30S ribosomal subunit. Contacts protein S5. The interaction surface between S4 and S5 is involved in control of translational fidelity.

Its subcellular location is the plastid. The protein localises to the chloroplast. Its function is as follows. One of the primary rRNA binding proteins, it binds directly to 16S rRNA where it nucleates assembly of the body of the 30S subunit. In terms of biological role, with S5 and S12 plays an important role in translational accuracy. The chain is Small ribosomal subunit protein uS4c (rps4) from Anthoceros angustus (Hornwort).